The chain runs to 157 residues: uncharacterized protein (157 aa).

A signal peptide spans methionine 1–alanine 28.

This is an uncharacterized protein from Bacillus subtilis (strain 168).